Here is a 165-residue protein sequence, read N- to C-terminus: Transcriptional repressor NrdR (165 aa).

The segment at 3-34 is a zinc-finger region; the sequence is CPYCGQLNNRVVDSRLSRSEFAVRRRRECLDC. One can recognise an ATP-cone domain in the interval 49–139; it reads VMVVKKDGRR…VYREFKDVDD (91 aa).

This sequence belongs to the NrdR family. It depends on Zn(2+) as a cofactor.

Negatively regulates transcription of bacterial ribonucleotide reductase nrd genes and operons by binding to NrdR-boxes. This Desulforapulum autotrophicum (strain ATCC 43914 / DSM 3382 / VKM B-1955 / HRM2) (Desulfobacterium autotrophicum) protein is Transcriptional repressor NrdR.